We begin with the raw amino-acid sequence, 817 residues long: MDLKTSYKGISLNPIYAGSSAVATVSENGKILATPVLDEINIIDLTPGSRKILHKISNEDEQEITALKLTPDGQYLTYVSQAQLLKIFHLKTGKVVRSMKISSPSYILDADSTSTLLAVGGTDGSIIVVDIENGYITHSFKGHGGTISSLKFYGQLNSKIWLLASGDTNGMVKVWDLVKRKCLHTLQEHTSAVRGLDIIEVPDNDEPSLNLLSGGRDDIINLWDFNMKKKCKLLKTLPVNQQVESCGFLKDGDGKRIIYTAGGDAIFQLIDSESGSVLKRTNKPIEELFIIGVLPILSNSQMFLVLSDQTLQLINVEEDLKNDEDTIQVTSSIAGNHGIIADMRYVGPELNKLALATNSPSLRIIPVPDLSGPEASLPLDVEIYEGHEDLLNSLDATEDGLWIATASKDNTAIVWRYNENSCKFDIYAKYIGHSAAVTAVGLPNIVSKGYPEFLLTASNDLTIKKWIIPKPTASMDVQIIKVSEYTRHAHEKDINALSVSPNDSIFATASYDKTCKIWNLENGELEATLANHKRGLWDVSFCQYDKLLATSSGDKTVKIWSLDTFSVMKTLEGHTNAVQRCSFINKQKQLISCGADGLIKIWDCSSGECLKTLDGHNNRLWALSTMNDGDMIVSADADGVFQFWKDCTEQEIEEEQEKAKLQVEQEQSLQNYMSKGDWTNAFLLAMTLDHPMRLFNVLKRALGESRSRQDTEEGKIEVIFNEELDQAISILNDEQLILLMKRCRDWNTNAKTHTIAQRTIRCILMHHNIAKLSEIPGMVKIVDAIIPYTQRHFTRVDNLVEQSYILDYALVEMDKLF.

WD repeat units lie at residues E59–K100, S102–S139, G142–Q187, S191–L233, P238–R280, G386–D425, G432–D476, A489–T528, N531–E572, G573–D614, H616–E654, and E664–S705.

In terms of assembly, interacts with snoRNA U3. Interacts with MPP10. Component of the ribosomal small subunit (SSU) processome composed of at least 40 protein subunits and snoRNA U3.

The protein localises to the nucleus. The protein resides in the nucleolus. Involved in nucleolar processing of pre-18S ribosomal RNA. This Saccharomyces cerevisiae (strain ATCC 204508 / S288c) (Baker's yeast) protein is U3 small nucleolar RNA-associated protein 13 (UTP13).